The primary structure comprises 771 residues: Putative 8-amino-7-oxononanoate synthase 2 (771 aa).

Residues 1 to 418 form a unknown region; it reads MPTGLGYDFL…TVKAAELGEI (418 aa). Residue Arg407 coordinates substrate. The tract at residues 419–771 is KAPA synthase; the sequence is VLLGTNSYLG…EDLTPQGAAL (353 aa). 485–486 serves as a coordination point for pyridoxal 5'-phosphate; sequence GY. His510 provides a ligand contact to substrate. Pyridoxal 5'-phosphate-binding positions include Ser556 and 581–584; that span reads DESH. An N6-(pyridoxal phosphate)lysine modification is found at Lys615.

It in the C-terminal section; belongs to the class-II pyridoxal-phosphate-dependent aminotransferase family. BioF subfamily. Pyridoxal 5'-phosphate is required as a cofactor.

It carries out the reaction 6-carboxyhexanoyl-[ACP] + L-alanine + H(+) = (8S)-8-amino-7-oxononanoate + holo-[ACP] + CO2. Functionally, catalyzes the decarboxylative condensation of pimeloyl-[acyl-carrier protein] and L-alanine to produce 8-amino-7-oxononanoate (AON), [acyl-carrier protein], and carbon dioxide. The polypeptide is Putative 8-amino-7-oxononanoate synthase 2 (bioF2) (Mycobacterium tuberculosis (strain CDC 1551 / Oshkosh)).